Reading from the N-terminus, the 221-residue chain is Probable septum site-determining protein MinC (221 aa).

Belongs to the MinC family. Interacts with MinD and FtsZ.

In terms of biological role, cell division inhibitor that blocks the formation of polar Z ring septums. Rapidly oscillates between the poles of the cell to destabilize FtsZ filaments that have formed before they mature into polar Z rings. Prevents FtsZ polymerization. The protein is Probable septum site-determining protein MinC of Shewanella halifaxensis (strain HAW-EB4).